Here is a 427-residue protein sequence, read N- to C-terminus: Glutamate-1-semialdehyde 2,1-aminomutase (427 aa).

K265 is modified (N6-(pyridoxal phosphate)lysine).

The protein belongs to the class-III pyridoxal-phosphate-dependent aminotransferase family. HemL subfamily. Homodimer. Pyridoxal 5'-phosphate serves as cofactor.

The protein resides in the cytoplasm. It catalyses the reaction (S)-4-amino-5-oxopentanoate = 5-aminolevulinate. It functions in the pathway porphyrin-containing compound metabolism; protoporphyrin-IX biosynthesis; 5-aminolevulinate from L-glutamyl-tRNA(Glu): step 2/2. This is Glutamate-1-semialdehyde 2,1-aminomutase from Mannheimia succiniciproducens (strain KCTC 0769BP / MBEL55E).